Here is a 134-residue protein sequence, read N- to C-terminus: Spermadhesin-1 (134 aa).

Residues 1-20 form the signal peptide; sequence MKLSSVIPWALLLSTATVDS. 2 cysteine pairs are disulfide-bonded: Cys-30-Cys-51 and Cys-74-Cys-95. Positions 30–131 constitute a CUB domain; that stretch reads CGGILKEESG…SFYEVLYFQD (102 aa).

It belongs to the spermadhesin family. As to expression, seminal vesicle tissue, ampulla and weakly in tissue of epididymis.

It is found in the secreted. Its function is as follows. Stimulates cell division and progesterone secretion of bovine granulosa cells in vitro in a potent and dose dependent manner. This protein appears to be a potent growth factor with effects on ovarian granulosa cells. The chain is Spermadhesin-1 (SPADH1) from Bos taurus (Bovine).